The primary structure comprises 321 residues: uncharacterized protein (321 aa).

This is an uncharacterized protein from Sinorhizobium fredii (strain NBRC 101917 / NGR234).